The primary structure comprises 234 residues: Nodulation protein NolW (234 aa).

A helical transmembrane segment spans residues 17 to 36 (LLCVGLFLFAGIHTTLGATL).

It localises to the membrane. Its function is as follows. Regulates cultivar-specific nodulation of soybean. The polypeptide is Nodulation protein NolW (nolW) (Rhizobium fredii (Sinorhizobium fredii)).